Reading from the N-terminus, the 360-residue chain is Photosystem II protein D1 2 (360 aa).

Transmembrane regions (helical) follow at residues 29 to 46, 118 to 133, and 142 to 156; these read YIGWFGVLMIPTLLAATT, HFLTGVFCYLGREWEL, and WICLAFSAPVAAATA. His-118 contributes to the chlorophyll a binding site. Tyr-126 is a pheophytin a binding site. Residues Asp-170 and Glu-189 each contribute to the [CaMn4O5] cluster site. A helical membrane pass occupies residues 197–218; it reads FHMLGVAGVFGGSLFSAMHGSL. His-198 is a chlorophyll a binding site. A quinone is bound by residues His-215 and 264–265; that span reads SF. Residue His-215 participates in Fe cation binding. His-272 lines the Fe cation pocket. A helical membrane pass occupies residues 274-288; sequence FLAAWPVIGIWFTAL. [CaMn4O5] cluster-binding residues include His-332, Glu-333, Asp-342, and Ala-344. Residues 345 to 360 constitute a propeptide that is removed on maturation; sequence AGEVAPVALTAPAING.

This sequence belongs to the reaction center PufL/M/PsbA/D family. In terms of assembly, PSII is composed of 1 copy each of membrane proteins PsbA, PsbB, PsbC, PsbD, PsbE, PsbF, PsbH, PsbI, PsbJ, PsbK, PsbL, PsbM, PsbT, PsbX, PsbY, PsbZ, Psb30/Ycf12, peripheral proteins PsbO, CyanoQ (PsbQ), PsbU, PsbV and a large number of cofactors. It forms dimeric complexes. It depends on The D1/D2 heterodimer binds P680, chlorophylls that are the primary electron donor of PSII, and subsequent electron acceptors. It shares a non-heme iron and each subunit binds pheophytin, quinone, additional chlorophylls, carotenoids and lipids. D1 provides most of the ligands for the Mn4-Ca-O5 cluster of the oxygen-evolving complex (OEC). There is also a Cl(-1) ion associated with D1 and D2, which is required for oxygen evolution. The PSII complex binds additional chlorophylls, carotenoids and specific lipids. as a cofactor. Post-translationally, tyr-161 forms a radical intermediate that is referred to as redox-active TyrZ, YZ or Y-Z. C-terminally processed by CtpA; processing is essential to allow assembly of the oxygen-evolving complex and thus photosynthetic growth.

The protein localises to the cellular thylakoid membrane. It catalyses the reaction 2 a plastoquinone + 4 hnu + 2 H2O = 2 a plastoquinol + O2. Its function is as follows. Photosystem II (PSII) is a light-driven water:plastoquinone oxidoreductase that uses light energy to abstract electrons from H(2)O, generating O(2) and a proton gradient subsequently used for ATP formation. It consists of a core antenna complex that captures photons, and an electron transfer chain that converts photonic excitation into a charge separation. The D1/D2 (PsbA/PsbD) reaction center heterodimer binds P680, the primary electron donor of PSII as well as several subsequent electron acceptors. In Trichormus variabilis (strain ATCC 29413 / PCC 7937) (Anabaena variabilis), this protein is Photosystem II protein D1 2.